The chain runs to 332 residues: tRNA U34 carboxymethyltransferase (332 aa).

Carboxy-S-adenosyl-L-methionine is bound by residues lysine 96, tryptophan 110, lysine 115, glycine 135, leucine 186–glutamate 187, methionine 204, tyrosine 208, and arginine 323.

The protein belongs to the class I-like SAM-binding methyltransferase superfamily. CmoB family. As to quaternary structure, homotetramer.

It carries out the reaction carboxy-S-adenosyl-L-methionine + 5-hydroxyuridine(34) in tRNA = 5-carboxymethoxyuridine(34) in tRNA + S-adenosyl-L-homocysteine + H(+). Catalyzes carboxymethyl transfer from carboxy-S-adenosyl-L-methionine (Cx-SAM) to 5-hydroxyuridine (ho5U) to form 5-carboxymethoxyuridine (cmo5U) at position 34 in tRNAs. This Hydrogenovibrio crunogenus (strain DSM 25203 / XCL-2) (Thiomicrospira crunogena) protein is tRNA U34 carboxymethyltransferase.